A 963-amino-acid polypeptide reads, in one-letter code: Ras-interacting protein 1 (963 aa).

The span at 1-10 shows a compositional bias: basic and acidic residues; it reads MLSGERKEGG. Disordered stretches follow at residues 1-22 and 35-118; these read MLSG…LPVG and LGRR…AQRW. Positions 41-57 are enriched in low complexity; that stretch reads SAASVKSSSSDTGSRSS. Position 94 is an omega-N-methylarginine (Arg-94). Positions 96 to 113 are enriched in gly residues; the sequence is SGTGTTGSSGAGGPGTPG. The Ras-associating domain maps to 144–259; it reads PPGVLKIFGA…RRFELRGREE (116 aa). Ser-188, Ser-280, and Ser-292 each carry phosphoserine. The disordered stretch occupies residues 267 to 356; sequence AFGAADSEGT…LSMAPGAADA (90 aa). The segment covering 290 to 301 has biased composition (low complexity); the sequence is AASGGAALASPG. Positions 302-313 are enriched in gly residues; it reads PGTGSGAPAGSG. Low complexity predominate over residues 320 to 333; that stretch reads NLSLRRSVSELSLQ. Phosphoserine occurs at positions 326, 328, 331, and 419. The Dilute domain maps to 600–897; the sequence is GRLARLIKEA…PPAEREAVDT (298 aa).

As to quaternary structure, interacts with Ras family members that have been activated by GTP binding. Interacts with HRAS, RAP1A, RAP2, RRAS, RAF1 and RRAS2. Interacts with MYH9 and ARHGAP29. In terms of tissue distribution, highly expressed in heart. Detected at lower levels in placenta and pancreas.

The protein localises to the cytoplasm. The protein resides in the perinuclear region. Its subcellular location is the golgi apparatus. It is found in the golgi stack. Functionally, required for the proper formation of vascular structures that develop via both vasculogenesis and angiogenesis. Acts as a critical and vascular-specific regulator of GTPase signaling, cell architecture, and adhesion, which is essential for endothelial cell morphogenesis and blood vessel tubulogenesis. Regulates the activity of Rho GTPases in part by recruiting ARHGAP29 and suppressing RhoA signaling and dampening ROCK and MYH9 activities in endothelial cells. May act as effector for Golgi-bound HRAS and other Ras-like proteins. May promote HRAS-mediated transformation. Negative regulator of amino acid starvation-induced autophagy. This Homo sapiens (Human) protein is Ras-interacting protein 1 (RASIP1).